Here is a 425-residue protein sequence, read N- to C-terminus: Polyribonucleotide 5'-hydroxyl-kinase Clp1 (425 aa).

ATP-binding positions include Glu-22, Lys-62, and Asp-124 to Thr-129.

Belongs to the Clp1 family. Clp1 subfamily. In terms of assembly, component of the tRNA splicing endonuclease complex, composed of CLP1, TSEN2, TSEN15, TSEN34 and TSEN54. Component of pre-mRNA cleavage complex II (CF-II). Also associates with numerous components of the pre-mRNA cleavage complex I (CF-I/CFIm), including NUDT21, CPSF2, CPSF3, CPSF6 and CPSF7. Interacts with CSTF2 and SYMPK. Requires Mg(2+) as cofactor. Mn(2+) serves as cofactor. It depends on Ni(2+) as a cofactor.

Its subcellular location is the nucleus. The catalysed reaction is a 5'-end dephospho-2'-deoxyribonucleoside-DNA + ATP = a 5'-end 5'-phospho-2'-deoxyribonucleoside-DNA + ADP + H(+). It catalyses the reaction a 5'-end dephospho-ribonucleoside-RNA + ATP = a 5'-end 5'-phospho-ribonucleoside-RNA + ADP + H(+). In terms of biological role, polynucleotide kinase that can phosphorylate the 5'-hydroxyl groups of double-stranded RNA (dsRNA), single-stranded RNA (ssRNA), double-stranded DNA (dsDNA) and double-stranded DNA:RNA hybrids. dsRNA is phosphorylated more efficiently than dsDNA, and the RNA component of a DNA:RNA hybrid is phosphorylated more efficiently than the DNA component. Plays a key role in both tRNA splicing and mRNA 3'-end formation. Component of the tRNA splicing endonuclease complex: phosphorylates the 5'-terminus of the tRNA 3'-exon during tRNA splicing; this phosphorylation event is a prerequisite for the subsequent ligation of the two exon halves and the production of a mature tRNA. Its role in tRNA splicing and maturation is required for cerebellar development. Component of the pre-mRNA cleavage complex II (CF-II), which seems to be required for mRNA 3'-end formation. Also phosphorylates the 5'-terminus of exogenously introduced short interfering RNAs (siRNAs), which is a necessary prerequisite for their incorporation into the RNA-induced silencing complex (RISC). However, endogenous siRNAs and microRNAs (miRNAs) that are produced by the cleavage of dsRNA precursors by DICER1 already contain a 5'-phosphate group, so this protein may be dispensible for normal RNA-mediated gene silencing. This chain is Polyribonucleotide 5'-hydroxyl-kinase Clp1, found in Homo sapiens (Human).